Reading from the N-terminus, the 286-residue chain is Thymidylate synthase (286 aa).

Arginine 27 provides a ligand contact to dUMP. Residue histidine 57 participates in (6R)-5,10-methylene-5,6,7,8-tetrahydrofolate binding. Residue arginine 148–arginine 149 participates in dUMP binding. Cysteine 168 functions as the Nucleophile in the catalytic mechanism. DUMP is bound by residues arginine 188–aspartate 191, asparagine 199, and histidine 229–tyrosine 231. (6R)-5,10-methylene-5,6,7,8-tetrahydrofolate is bound at residue aspartate 191. Alanine 285 contributes to the (6R)-5,10-methylene-5,6,7,8-tetrahydrofolate binding site.

This sequence belongs to the thymidylate synthase family. Bacterial-type ThyA subfamily. Homodimer.

The protein localises to the cytoplasm. The enzyme catalyses dUMP + (6R)-5,10-methylene-5,6,7,8-tetrahydrofolate = 7,8-dihydrofolate + dTMP. The protein operates within pyrimidine metabolism; dTTP biosynthesis. Functionally, catalyzes the reductive methylation of 2'-deoxyuridine-5'-monophosphate (dUMP) to 2'-deoxythymidine-5'-monophosphate (dTMP) while utilizing 5,10-methylenetetrahydrofolate (mTHF) as the methyl donor and reductant in the reaction, yielding dihydrofolate (DHF) as a by-product. This enzymatic reaction provides an intracellular de novo source of dTMP, an essential precursor for DNA biosynthesis. This chain is Thymidylate synthase, found in Psychrobacter sp. (strain PRwf-1).